Here is a 470-residue protein sequence, read N- to C-terminus: Argininosuccinate lyase (470 aa).

Belongs to the lyase 1 family. Argininosuccinate lyase subfamily.

It is found in the cytoplasm. The catalysed reaction is 2-(N(omega)-L-arginino)succinate = fumarate + L-arginine. The protein operates within amino-acid biosynthesis; L-arginine biosynthesis; L-arginine from L-ornithine and carbamoyl phosphate: step 3/3. The sequence is that of Argininosuccinate lyase from Mycolicibacterium vanbaalenii (strain DSM 7251 / JCM 13017 / BCRC 16820 / KCTC 9966 / NRRL B-24157 / PYR-1) (Mycobacterium vanbaalenii).